The primary structure comprises 184 residues: Deoxyuridine 5'-triphosphate nucleotidohydrolase (184 aa).

Positions 1-16 are enriched in polar residues; it reads MPHTQTDAHQNNQENF. The disordered stretch occupies residues 1-25; it reads MPHTQTDAHQNNQENFSSSLISSRP. Substrate is bound by residues 96–98, asparagine 109, 113–115, and lysine 123; these read RSG and TID. Positions 165-184 are disordered; that stretch reads STKNTVGNRGAGGFGSTGHD. Residues 173 to 184 are compositionally biased toward gly residues; the sequence is RGAGGFGSTGHD.

The protein belongs to the dUTPase family. It depends on Mg(2+) as a cofactor.

The enzyme catalyses dUTP + H2O = dUMP + diphosphate + H(+). The protein operates within pyrimidine metabolism; dUMP biosynthesis; dUMP from dCTP (dUTP route): step 2/2. In terms of biological role, this enzyme is involved in nucleotide metabolism: it produces dUMP, the immediate precursor of thymidine nucleotides and it decreases the intracellular concentration of dUTP so that uracil cannot be incorporated into DNA. This is Deoxyuridine 5'-triphosphate nucleotidohydrolase from Bartonella henselae (strain ATCC 49882 / DSM 28221 / CCUG 30454 / Houston 1) (Rochalimaea henselae).